The chain runs to 1088 residues: RNA-directed RNA polymerase (1088 aa).

The 187-residue stretch at 501–687 folds into the RdRp catalytic domain; the sequence is LSYGDVTRFL…AKRYIAGGKI (187 aa).

The protein belongs to the reoviridae RNA-directed RNA polymerase family. As to quaternary structure, interacts with VP3 (Potential). Interacts with VP2; this interaction activates VP1. Interacts with NSP5; this interaction is probably necessary for the formation of functional virus factories. Interacts with NSP2; this interaction is weak. Requires Mg(2+) as cofactor.

It localises to the virion. It carries out the reaction RNA(n) + a ribonucleoside 5'-triphosphate = RNA(n+1) + diphosphate. Its function is as follows. RNA-directed RNA polymerase that is involved in both transcription and genome replication. Together with VP3 capping enzyme, forms an enzyme complex positioned near the channels situated at each of the five-fold vertices of the core. Following infection, the outermost layer of the virus is lost, leaving a double-layered particle (DLP) made up of the core and VP6 shell. VP1 then catalyzes the transcription of fully conservative plus-strand genomic RNAs that are extruded through the DLP's channels into the cytoplasm where they function as mRNAs for translation of viral proteins. One copy of each of the viral (+)RNAs is also recruited during core assembly, together with newly synthesized polymerase complexes and VP2. The polymerase of these novo-formed particles catalyzes the synthesis of complementary minus-strands leading to dsRNA formation. To do so, the polymerase specifically recognizes and binds 4 bases 5'-UGUG-3' in the conserved 3'-sequence of plus-strand RNA templates. VP2 presumably activates the autoinhibited VP1-RNA complex to coordinate packaging and genome replication. Once dsRNA synthesis is complete, the polymerase switches to the transcriptional mode, thus providing secondary transcription. This is RNA-directed RNA polymerase from Macaca mulatta (Rhesus macaque).